Consider the following 205-residue polypeptide: Allergen Asp f 15 homolog (205 aa).

The protein belongs to the cerato-platanin family.

The protein localises to the secreted. This chain is Allergen Asp f 15 homolog, found in Arthroderma benhamiae (strain ATCC MYA-4681 / CBS 112371) (Trichophyton mentagrophytes).